Reading from the N-terminus, the 427-residue chain is Homeobox protein knotted-1-like 3 (427 aa).

2 disordered regions span residues 19-49 (QTHHQHQQYQSDQPDPNSKPPEPHHSFQPAP) and 272-291 (TGVSPGEGTSATMSDDEDDQ). Residues 272 to 284 (TGVSPGEGTSATM) are compositionally biased toward polar residues. Positions 330-350 (ELKHELKQGYKEKIVDIREEI) constitute an ELK domain. A DNA-binding region (homeobox; TALE-type) is located at residues 351–414 (LRKRRAGKLP…NQRKRNWHSN (64 aa)).

This sequence belongs to the TALE/KNOX homeobox family. In terms of tissue distribution, maximally expressed in sepals, petals and fully expanded leaves. Also expressed in other flower organs and in developing leaves. Low level expression in stem internodes.

The protein resides in the nucleus. This chain is Homeobox protein knotted-1-like 3, found in Malus domestica (Apple).